We begin with the raw amino-acid sequence, 286 residues long: Probable protein S-acyltransferase 16 (286 aa).

Transmembrane regions (helical) follow at residues 11–31 (PVTV…FTFI) and 45–65 (NAAA…IAVF). The DHHC domain occupies 97 to 147 (RYCQKCSHFKPPRAHHCRVCKRCVLRMDHHCIWINNCVGHTNYKVFFVFVV). The active-site S-palmitoyl cysteine intermediate is cysteine 127. The next 2 membrane-spanning stretches (helical) occupy residues 141 to 161 (VFFV…VLLV) and 182 to 202 (IYVI…VLLG).

It belongs to the DHHC palmitoyltransferase family.

The protein localises to the golgi apparatus membrane. It catalyses the reaction L-cysteinyl-[protein] + hexadecanoyl-CoA = S-hexadecanoyl-L-cysteinyl-[protein] + CoA. In terms of biological role, palmitoyl acyltransferase. This Arabidopsis thaliana (Mouse-ear cress) protein is Probable protein S-acyltransferase 16 (PAT16).